We begin with the raw amino-acid sequence, 279 residues long: Shikimate dehydrogenase (NADP(+)) (279 aa).

Shikimate contacts are provided by residues 19 to 21 (SFS) and threonine 66. The active-site Proton acceptor is lysine 70. Glutamate 82 lines the NADP(+) pocket. 2 residues coordinate shikimate: asparagine 91 and aspartate 106. Residues 130 to 134 (GSGGA) and leucine 222 contribute to the NADP(+) site. Tyrosine 224 lines the shikimate pocket. Glycine 245 contributes to the NADP(+) binding site.

The protein belongs to the shikimate dehydrogenase family. As to quaternary structure, homodimer.

It carries out the reaction shikimate + NADP(+) = 3-dehydroshikimate + NADPH + H(+). It participates in metabolic intermediate biosynthesis; chorismate biosynthesis; chorismate from D-erythrose 4-phosphate and phosphoenolpyruvate: step 4/7. Involved in the biosynthesis of the chorismate, which leads to the biosynthesis of aromatic amino acids. Catalyzes the reversible NADPH linked reduction of 3-dehydroshikimate (DHSA) to yield shikimate (SA). The polypeptide is Shikimate dehydrogenase (NADP(+)) (Methanococcus maripaludis (strain C6 / ATCC BAA-1332)).